The primary structure comprises 708 residues: Nucleolar protein 11-like (708 aa).

It is found in the nucleus. The protein localises to the nucleolus. In terms of biological role, ribosome biogenesis factor. May be required for both optimal rDNA transcription and pre-rRNA processing. The sequence is that of Nucleolar protein 11-like (nol11) from Danio rerio (Zebrafish).